The primary structure comprises 208 residues: Large ribosomal subunit protein uL4 (208 aa).

The tract at residues 51–79 (AKERAEVSFSTKKLKKQKGTGGARAGSRK) is disordered.

This sequence belongs to the universal ribosomal protein uL4 family. Part of the 50S ribosomal subunit.

In terms of biological role, one of the primary rRNA binding proteins, this protein initially binds near the 5'-end of the 23S rRNA. It is important during the early stages of 50S assembly. It makes multiple contacts with different domains of the 23S rRNA in the assembled 50S subunit and ribosome. Forms part of the polypeptide exit tunnel. The chain is Large ribosomal subunit protein uL4 from Cytophaga hutchinsonii (strain ATCC 33406 / DSM 1761 / CIP 103989 / NBRC 15051 / NCIMB 9469 / D465).